A 197-amino-acid polypeptide reads, in one-letter code: 7-methyl-GTP pyrophosphatase (197 aa).

D74 acts as the Proton acceptor in catalysis.

It belongs to the Maf family. YceF subfamily. A divalent metal cation serves as cofactor.

The protein localises to the cytoplasm. The enzyme catalyses N(7)-methyl-GTP + H2O = N(7)-methyl-GMP + diphosphate + H(+). Its function is as follows. Nucleoside triphosphate pyrophosphatase that hydrolyzes 7-methyl-GTP (m(7)GTP). May have a dual role in cell division arrest and in preventing the incorporation of modified nucleotides into cellular nucleic acids. This chain is 7-methyl-GTP pyrophosphatase, found in Saccharophagus degradans (strain 2-40 / ATCC 43961 / DSM 17024).